The chain runs to 130 residues: Histone H2A.1 (130 aa).

Residues 1-22 are disordered; it reads MSGGKGKAGSSEKASTSRSAKA. The residue at position 2 (serine 2) is an N-acetylserine. 2 positions are modified to N6-acetyllysine: lysine 5 and lysine 7. At glutamine 105 the chain carries N5-methylglutamine. Serine 127 is subject to Phosphoserine. The [ST]-Q motif motif lies at 127–128; sequence SQ.

Belongs to the histone H2A family. In terms of assembly, the nucleosome is a histone octamer containing two molecules each of H2A, H2B, H3 and H4 assembled in one H3-H4 heterotetramer and two H2A-H2B heterodimers. The octamer wraps approximately 147 bp of DNA. In terms of processing, phosphorylated to form H2AS128ph (gamma-H2A) in response to DNA double-strand breaks (DSBs) generated by exogenous genotoxic agents and by stalled replication forks. Phosphorylation is dependent on the DNA damage checkpoint kinases MEC1/ATR and TEL1/ATM, spreads on either side of a detected DSB site and may mark the surrounding chromatin for recruitment of proteins required for DNA damage signaling and repair. Gamma-H2A is removed from the DNA prior to the strand invasion-primer extension step of the repair process and subsequently dephosphorylated. Dephosphorylation is necessary for efficient recovery from the DNA damage checkpoint. Post-translationally, acetylated by ESA1 to form H2AK4ac and H2AK7ac.

It localises to the nucleus. The protein resides in the chromosome. In terms of biological role, core component of nucleosome which plays a central role in DNA double strand break (DSB) repair. Nucleosomes wrap and compact DNA into chromatin, limiting DNA accessibility to the cellular machineries which require DNA as a template. Histones thereby play a central role in transcription regulation, DNA repair, DNA replication and chromosomal stability. DNA accessibility is regulated via a complex set of post-translational modifications of histones, also called histone code, and nucleosome remodeling. This chain is Histone H2A.1 (HTA1), found in Lodderomyces elongisporus (strain ATCC 11503 / CBS 2605 / JCM 1781 / NBRC 1676 / NRRL YB-4239) (Yeast).